The primary structure comprises 213 residues: Putative cytochrome c-type biogenesis protein HI_1454 (213 aa).

6 helical membrane passes run 15–35, 46–66, 77–97, 118–138, 154–174, and 192–212; these read GLAS…FGIL, FLFI…FGFL, IIAG…FKIG, AFVL…PILA, ASMM…FSFF, and FKIG…TNNF.

The protein belongs to the DsbD family.

Its subcellular location is the cell membrane. In terms of biological role, could be involved in cytochrome c synthesis. The protein is Putative cytochrome c-type biogenesis protein HI_1454 of Haemophilus influenzae (strain ATCC 51907 / DSM 11121 / KW20 / Rd).